The chain runs to 262 residues: Calbindin (262 aa).

Position 2 is an N-acetylthreonine (Thr2). EF-hand domains lie at 12 to 47 (ISAA…LQQA), 54 to 89 (DLTP…EENF), 99 to 134 (KSSE…LLQK), 143 to 178 (KLTE…QENF), and 187 to 222 (MCAK…LCEK). Ca(2+) contacts are provided by Asp25, Asp27, Asn29, Tyr31, and Glu36. 14 residues coordinate Ca(2+): Asp112, Asp114, Ser116, Glu123, Asp156, Asn158, Asp160, Lys162, Glu167, Asp200, Asp202, Asn204, Tyr206, and Glu211.

This sequence belongs to the calbindin family. In terms of tissue distribution, highly abundant in supporting cells. Also present in hair cells.

Its function is as follows. Buffers cytosolic calcium. May stimulate a membrane Ca(2+)-ATPase and a 3',5'-cyclic nucleotide phosphodiesterase. This is Calbindin (CALB1) from Gallus gallus (Chicken).